The sequence spans 488 residues: N-succinylglutamate 5-semialdehyde dehydrogenase (488 aa).

221–226 is an NAD(+) binding site; it reads GSSRTG. Active-site residues include E244 and C278.

This sequence belongs to the aldehyde dehydrogenase family. AstD subfamily.

The enzyme catalyses N-succinyl-L-glutamate 5-semialdehyde + NAD(+) + H2O = N-succinyl-L-glutamate + NADH + 2 H(+). The protein operates within amino-acid degradation; L-arginine degradation via AST pathway; L-glutamate and succinate from L-arginine: step 4/5. Its function is as follows. Catalyzes the NAD-dependent reduction of succinylglutamate semialdehyde into succinylglutamate. This Pseudomonas savastanoi pv. phaseolicola (strain 1448A / Race 6) (Pseudomonas syringae pv. phaseolicola (strain 1448A / Race 6)) protein is N-succinylglutamate 5-semialdehyde dehydrogenase.